Reading from the N-terminus, the 461-residue chain is Argininosuccinate lyase (461 aa).

The 2-(N(omega)-L-arginino)succinate site is built by Ser-28, Asn-115, and Thr-160. The active-site Proton acceptor is His-161. Ser-282 acts as the Proton donor in catalysis. 2-(N(omega)-L-arginino)succinate-binding residues include Asn-290, Tyr-322, Gln-327, and Lys-330.

This sequence belongs to the lyase 1 family. Argininosuccinate lyase subfamily. Homotetramer.

The enzyme catalyses 2-(N(omega)-L-arginino)succinate = fumarate + L-arginine. It functions in the pathway amino-acid biosynthesis; L-arginine biosynthesis; L-arginine from L-ornithine and carbamoyl phosphate: step 3/3. This is Argininosuccinate lyase (arg7) from Schizosaccharomyces pombe (strain 972 / ATCC 24843) (Fission yeast).